The primary structure comprises 420 residues: Fasciclin-like arabinogalactan protein 8 (420 aa).

Positions 1-25 (MAASQTFSLLAFTFSLLAFASTVSS) are cleaved as a signal peptide. FAS1 domains follow at residues 26–172 (HNIT…DAPI) and 186–326 (SLSN…DNVL). N-linked (GlcNAc...) asparagine glycans are attached at residues Asn-27, Asn-128, Asn-162, Asn-189, and Asn-273. The disordered stretch occupies residues 335-394 (SKSPSPAPAPEPVTAPTPSPADAPSPTAASPPAPPTDESPESAPSDSPTGSANSKSANAA). Over residues 339–371 (SPAPAPEPVTAPTPSPADAPSPTAASPPAPPTD) the composition is skewed to pro residues. Asn-392 carries GPI-anchor amidated asparagine lipidation. Positions 393 to 420 (AAVGVSTPSLFTALVTIAAIAVSVSLCS) are cleaved as a propeptide — removed in mature form.

The protein belongs to the fasciclin-like AGP family. Expressed mainly in flowers and to a lesser extent in leaves and roots.

Its subcellular location is the cell membrane. Functionally, may be a cell surface adhesion protein. This is Fasciclin-like arabinogalactan protein 8 (FLA8) from Arabidopsis thaliana (Mouse-ear cress).